The primary structure comprises 158 residues: Transcription elongation factor GreA (158 aa).

The protein belongs to the GreA/GreB family.

Necessary for efficient RNA polymerase transcription elongation past template-encoded arresting sites. The arresting sites in DNA have the property of trapping a certain fraction of elongating RNA polymerases that pass through, resulting in locked ternary complexes. Cleavage of the nascent transcript by cleavage factors such as GreA or GreB allows the resumption of elongation from the new 3'terminus. GreA releases sequences of 2 to 3 nucleotides. This chain is Transcription elongation factor GreA, found in Yersinia pestis.